The chain runs to 181 residues: ATP-dependent protease subunit HslV (181 aa).

Thr2 is an active-site residue. 3 residues coordinate Na(+): Gly157, Cys160, and Thr163.

It belongs to the peptidase T1B family. HslV subfamily. As to quaternary structure, a double ring-shaped homohexamer of HslV is capped on each side by a ring-shaped HslU homohexamer. The assembly of the HslU/HslV complex is dependent on binding of ATP.

It is found in the cytoplasm. The catalysed reaction is ATP-dependent cleavage of peptide bonds with broad specificity.. With respect to regulation, allosterically activated by HslU binding. Protease subunit of a proteasome-like degradation complex believed to be a general protein degrading machinery. The chain is ATP-dependent protease subunit HslV from Hahella chejuensis (strain KCTC 2396).